Reading from the N-terminus, the 233-residue chain is 5'-methylthioadenosine/S-adenosylhomocysteine nucleosidase (233 aa).

Residue glutamate 12 is the Proton acceptor of the active site. Substrate contacts are provided by residues glycine 78, isoleucine 156, and methionine 177–glutamate 178. Aspartate 201 (proton donor) is an active-site residue.

The protein belongs to the PNP/UDP phosphorylase family. MtnN subfamily.

It carries out the reaction S-adenosyl-L-homocysteine + H2O = S-(5-deoxy-D-ribos-5-yl)-L-homocysteine + adenine. The catalysed reaction is S-methyl-5'-thioadenosine + H2O = 5-(methylsulfanyl)-D-ribose + adenine. It catalyses the reaction 5'-deoxyadenosine + H2O = 5-deoxy-D-ribose + adenine. It functions in the pathway amino-acid biosynthesis; L-methionine biosynthesis via salvage pathway; S-methyl-5-thio-alpha-D-ribose 1-phosphate from S-methyl-5'-thioadenosine (hydrolase route): step 1/2. Catalyzes the irreversible cleavage of the glycosidic bond in both 5'-methylthioadenosine (MTA) and S-adenosylhomocysteine (SAH/AdoHcy) to adenine and the corresponding thioribose, 5'-methylthioribose and S-ribosylhomocysteine, respectively. Also cleaves 5'-deoxyadenosine, a toxic by-product of radical S-adenosylmethionine (SAM) enzymes, into 5-deoxyribose and adenine. The sequence is that of 5'-methylthioadenosine/S-adenosylhomocysteine nucleosidase from Listeria monocytogenes serovar 1/2a (strain ATCC BAA-679 / EGD-e).